A 468-amino-acid polypeptide reads, in one-letter code: Argininosuccinate lyase (468 aa).

It belongs to the lyase 1 family. Argininosuccinate lyase subfamily.

Its subcellular location is the cytoplasm. The enzyme catalyses 2-(N(omega)-L-arginino)succinate = fumarate + L-arginine. It functions in the pathway amino-acid biosynthesis; L-arginine biosynthesis; L-arginine from L-ornithine and carbamoyl phosphate: step 3/3. This is Argininosuccinate lyase from Hahella chejuensis (strain KCTC 2396).